Consider the following 144-residue polypeptide: Large ribosomal subunit protein uL15 (144 aa).

The tract at residues 1–44 (MKLNELMPSEGSRTNRKRIGRGTSSGTGKTAGRGQKGQKARGKV) is disordered. A compositionally biased stretch (gly residues) spans 23–35 (TSSGTGKTAGRGQ).

Belongs to the universal ribosomal protein uL15 family. Part of the 50S ribosomal subunit.

In terms of biological role, binds to the 23S rRNA. The protein is Large ribosomal subunit protein uL15 of Pediococcus pentosaceus (strain ATCC 25745 / CCUG 21536 / LMG 10740 / 183-1w).